Consider the following 66-residue polypeptide: Large ribosomal subunit protein bL33c (66 aa).

Belongs to the bacterial ribosomal protein bL33 family.

It is found in the plastid. The protein localises to the chloroplast. This Oryza nivara (Indian wild rice) protein is Large ribosomal subunit protein bL33c.